A 340-amino-acid chain; its full sequence is GTPase Obg (340 aa).

Residues 1–158 (MSFIDEAKVY…KYITLKLKII (158 aa)) enclose the Obg domain. An OBG-type G domain is found at 159–325 (SDIGIIGLPN…LSTLIQYIHK (167 aa)). GTP contacts are provided by residues 165–172 (GLPNAGKS), 190–194 (FTTLE), 211–214 (DIPG), 278–281 (NKSD), and 306–308 (SSI). The Mg(2+) site is built by Ser-172 and Thr-192.

Belongs to the TRAFAC class OBG-HflX-like GTPase superfamily. OBG GTPase family. As to quaternary structure, monomer. Mg(2+) serves as cofactor.

It localises to the cytoplasm. Its function is as follows. An essential GTPase which binds GTP, GDP and possibly (p)ppGpp with moderate affinity, with high nucleotide exchange rates and a fairly low GTP hydrolysis rate. Plays a role in control of the cell cycle, stress response, ribosome biogenesis and in those bacteria that undergo differentiation, in morphogenesis control. The sequence is that of GTPase Obg from Ehrlichia chaffeensis (strain ATCC CRL-10679 / Arkansas).